A 43-amino-acid chain; its full sequence is Large ribosomal subunit protein uL5 (43 aa).

Belongs to the universal ribosomal protein uL5 family. Part of the 50S ribosomal subunit; part of the 5S rRNA/L5/L18/L25 subcomplex. Contacts the 5S rRNA and the P site tRNA. Forms a bridge to the 30S subunit in the 70S ribosome.

In terms of biological role, this is one of the proteins that bind and probably mediate the attachment of the 5S RNA into the large ribosomal subunit, where it forms part of the central protuberance. In the 70S ribosome it contacts protein S13 of the 30S subunit (bridge B1b), connecting the 2 subunits; this bridge is implicated in subunit movement. Contacts the P site tRNA; the 5S rRNA and some of its associated proteins might help stabilize positioning of ribosome-bound tRNAs. This Serratia marcescens protein is Large ribosomal subunit protein uL5 (rplE).